The chain runs to 86 residues: Serine protease inhibitor Kazal-type 2 (86 aa).

Residues 1–16 (MLRLVLLLLVTDFAAS) form the signal peptide. Positions 32-86 (QFRTPDCGHFDFPACPRNLNPVCGTDMNTYSNECTLCMKIREDGSHINIIKDEPC) constitute a Kazal-like domain. Intrachain disulfides connect cysteine 38-cysteine 68, cysteine 46-cysteine 65, and cysteine 54-cysteine 86.

In terms of tissue distribution, expressed in sperm (at protein level). Expressed in testis but not in ovary, brain, heart, kidney or lung. Within testis, expressed in epididymis and germ cells.

The protein localises to the secreted. The protein resides in the cytoplasmic vesicle. It is found in the secretory vesicle. It localises to the acrosome. In terms of biological role, as a strong inhibitor of acrosin, it is required for normal spermiogenesis. It probably hinders premature activation of proacrosin and other proteases, thus preventing the cascade of events leading to spermiogenesis defects. May be involved in the regulation of serine protease-dependent germ cell apoptosis. It also inhibits trypsin. The protein is Serine protease inhibitor Kazal-type 2 (Spink2) of Mus musculus (Mouse).